We begin with the raw amino-acid sequence, 219 residues long: Ribosome maturation factor RimP (219 aa).

A disordered region spans residues 195–219 (EGRIPGDDLGAEPEDAASTETQEKK).

The protein belongs to the RimP family.

The protein localises to the cytoplasm. In terms of biological role, required for maturation of 30S ribosomal subunits. This is Ribosome maturation factor RimP from Brucella melitensis biotype 2 (strain ATCC 23457).